Consider the following 211-residue polypeptide: tRNA (guanine-N(7)-)-methyltransferase (211 aa).

Positions 44, 69, 96, and 118 each coordinate S-adenosyl-L-methionine. Aspartate 118 is a catalytic residue. Substrate is bound at residue lysine 122. The tract at residues arginine 124–arginine 129 is interaction with RNA. Residues aspartate 154 and threonine 191–glutamate 194 each bind substrate.

It belongs to the class I-like SAM-binding methyltransferase superfamily. TrmB family.

It catalyses the reaction guanosine(46) in tRNA + S-adenosyl-L-methionine = N(7)-methylguanosine(46) in tRNA + S-adenosyl-L-homocysteine. The protein operates within tRNA modification; N(7)-methylguanine-tRNA biosynthesis. In terms of biological role, catalyzes the formation of N(7)-methylguanine at position 46 (m7G46) in tRNA. This is tRNA (guanine-N(7)-)-methyltransferase from Streptococcus pneumoniae (strain JJA).